Here is a 476-residue protein sequence, read N- to C-terminus: POC1 centriolar protein homolog B (476 aa).

WD repeat units lie at residues 16–55 (GHKAAITSADFSPNCKQIATASWDTFLMLWSLKPHARAYR), 58–97 (GHKDVVTSLQFSPQGNLLASASRDRTVRLWVLDRKGKSSE), 100–139 (AHTAPVRSVDFSADGQLLVTASEDKSIKVWSMFRQRFLYS), 142–181 (RHTHWVRCAKFSPDGRLIVSCSEDKTIKIWDTTNKQCVNN), 183–223 (SDSV…LLQH), 226–265 (VHSCGVNCLSFHPLGNSLVTASSDGTVKMLDLIEGRLIYT), and 268–307 (GHTGPVFTVSFSKDGELLTSGGADAQVLIWRTNFIHLHCK). Positions 429–468 (ALEHIMEQLNILTQTVSILEQRLSLTEDKLRDCLENQQKL) form a coiled coil.

The protein belongs to the WD repeat POC1 family. Interacts with POC1A. Interacts with FAM161A. Interacts with CEP44; the interaction is direct and recruits POC1B to centriolar microtubules. Forms a microtubule-associated complex with POC5, CETN2 and FAM161A. Interacts with CCDC15. Phosphorylated in mitotic cells that may be mediated by CDK1. As to expression, expressed in the retina.

It localises to the cytoplasm. It is found in the cytoskeleton. The protein localises to the microtubule organizing center. Its subcellular location is the centrosome. The protein resides in the centriole. It localises to the cilium basal body. It is found in the spindle pole. Plays an important role in centriole assembly and/or stability and ciliogenesis. Involved in early steps of centriole duplication, as well as in the later steps of centriole length control. Acts in concert with POC1A to ensure centriole integrity and proper mitotic spindle formation. Required for primary cilia formation, ciliary length and also cell proliferation. Required for retinal integrity. Acts as a positive regulator of centriole elongation. The polypeptide is POC1 centriolar protein homolog B (Poc1b) (Mus musculus (Mouse)).